Here is a 663-residue protein sequence, read N- to C-terminus: Transcriptional repressor CTCFL (663 aa).

Over residues 24–51 the composition is skewed to basic and acidic residues; it reads EKGLKEEEKDGVCREKDHRSPSELEAER. 2 disordered regions span residues 24-55 and 221-250; these read EKGL…TSGA and NSNV…QRKT. 10 C2H2-type zinc fingers span residues 257 to 279, 285 to 307, 313 to 336, 342 to 364, 370 to 392, 398 to 421, 428 to 451, 458 to 480, 486 to 508, and 514 to 537; these read FHCD…MKTH, HLCH…VNTH, YKCN…RYKH, FKCS…VRSH, FQCC…MRTH, YECH…LQKH, YQCP…RNLH, LKCR…QKTH, FKCK…IRTH, and FTCL…RKYH. The C2H2-type 11; atypical zinc-finger motif lies at 546–568; that stretch reads YKCSKCGKGFSRWINLHRHSEKC. Positions 569 to 630 are disordered; it reads GSGEAKSAAS…STTKGEQFPG (62 aa). Residues 580–590 are compositionally biased toward basic residues; that stretch reads KGRRTRKRKQT. Basic and acidic residues predominate over residues 594–607; that stretch reads EATKGQKEAAKGWK. Residues 608–620 show a composition bias toward low complexity; it reads EAANGDEAAAEEA.

This sequence belongs to the CTCF zinc-finger protein family. As to quaternary structure, interacts with histones, PRMT7 and SETD1A. Interacts (via N-terminus) with BAG6/BAT3. In terms of tissue distribution, testis specific. Specifically expressed in primary spermatocytes.

It is found in the cytoplasm. It localises to the nucleus. Functionally, testis-specific DNA binding protein responsible for insulator function, nuclear architecture and transcriptional control, which probably acts by recruiting epigenetic chromatin modifiers. Plays a key role in gene imprinting in male germline, by participating in the establishment of differential methylation at the IGF2/H19 imprinted control region (ICR). Directly binds the unmethylated H19 ICR and recruits the PRMT7 methyltransferase, leading to methylate histone H4 'Arg-3' to form H4R3sme2. This probably leads to recruit de novo DNA methyltransferases at these sites. Seems to act as tumor suppressor. In association with DNMT1 and DNMT3B, involved in activation of BAG1 gene expression by binding to its promoter. Required for dimethylation of H3 lysine 4 (H3K4me2) of MYC and BRCA1 promoters. The sequence is that of Transcriptional repressor CTCFL (CTCFL) from Homo sapiens (Human).